We begin with the raw amino-acid sequence, 360 residues long: F-box protein SKP2B (360 aa).

In terms of domain architecture, F-box spans 25 to 76 (ISEWKDIPVELLMKILNLVDDRTVIIASCICSGWRDAVSLGLTRLSLSWCKK). LRR repeat units lie at residues 77-99 (NMNSLVLSLAPKFVKLQTLVLRQ), 101-126 (KPQLEDNAVEAIANHCHELQDLDLSK), 127-152 (SSKITDHSLYSLARGCTNLTKLNLSG), 153-178 (CTSFSDTALAHLTRFCRKLKILNLCG), 180-205 (VEAVSDNTLQAIGENCNQLQSLNLGW), 206-231 (CENISDDGVMSLAYGCPDLRTLDLCS), 232-257 (CVLITDESVVALANRCIHLRSLGLYY), 258-301 (CRNI…NISQ), and 302-333 (CTYLTPSAVQAVCDTFPALHTCSGRHSLVMSG).

Its function is as follows. Component of SCF(SKP2B) E3 ubiquitin ligase complexes, which mediate the ubiquitination and subsequent proteasomal degradation of the cyclin-dependent kinase inhibitor KRP1. Does not interact with auxin. This is F-box protein SKP2B (SKP2B) from Arabidopsis thaliana (Mouse-ear cress).